Consider the following 471-residue polypeptide: uncharacterized protein (471 aa).

11 helical membrane passes run 15 to 35 (LWGP…TILL), 66 to 86 (PLQA…IVGV), 89 to 109 (AIMF…LFAM), 147 to 167 (WLGV…IMVQ), 179 to 199 (FSFN…LVVI), 210 to 230 (EFVV…IVLM), 237 to 257 (AFFS…GGFA), 303 to 323 (VIGI…IVLA), 353 to 373 (GYFV…VVIF), 386 to 406 (LAGH…AAGG), and 410 to 430 (IWGV…IALL).

This sequence belongs to the alanine or glycine:cation symporter (AGCS) (TC 2.A.25) family.

Its subcellular location is the cell membrane. This is an uncharacterized protein from Bacillus subtilis (strain 168).